Consider the following 183-residue polypeptide: Calcineurin subunit B type 2 (183 aa).

A lipid anchor (N-myristoyl glycine) is attached at G2. 4 EF-hand domains span residues 25-60 (REIK…SMNP), 64-92 (RIIS…FHPK), 94-129 (DKAD…MVGS), and 135-170 (QISS…SGCN). 4 residues coordinate Ca(2+): D107, N109, D111, and E118.

It belongs to the calcineurin regulatory subunit family. As to quaternary structure, calcineurin is composed of a catalytic subunit (A) and a regulatory subunit (B).

Its function is as follows. Regulatory subunit of calcineurin, a calcium-dependent, calmodulin stimulated protein phosphatase. Confers calcium sensitivity. The sequence is that of Calcineurin subunit B type 2 (cnbB) from Dictyostelium discoideum (Social amoeba).